The sequence spans 952 residues: Glutamate receptor 2.7 (952 aa).

Positions 1–32 (MKVMNPRKTNNTFMYYFVLFVCGFVLMEGCLG) are cleaved as a signal peptide. Residues 33 to 582 (QNQTTEIKVG…NTWVFLRPWS (550 aa)) lie on the Extracellular side of the membrane. 5 N-linked (GlcNAc...) asparagine glycosylation sites follow: Asn34, Asn60, Asn355, Asn428, and Asn546. The helical transmembrane segment at 583–603 (LDLWVTTACFFVFIGFIVWIL) threads the bilayer. The Cytoplasmic segment spans residues 604-612 (EHRVNTDFR). Residues 613-633 (GPPHHQIGTSFWFAFSTMNFA) traverse the membrane as a helical segment. The Cytoplasmic portion of the chain corresponds to 634–637 (HREK). Residues 638–658 (VVSNLARFVVLVWCFVVLVLI) traverse the membrane as a helical segment. Over 659–821 (QSYTANLTSF…LSSNHLSLSS (163 aa)) the chain is Extracellular. 5 N-linked (GlcNAc...) asparagine glycosylation sites follow: Asn664, Asn728, Asn748, Asn784, and Asn809. The chain crosses the membrane as a helical span at residues 822–842 (FWGLFLIAGIASFLALLIFVA). Over 843–952 (NFLYEHKHTL…ESAIIQCEGE (110 aa)) the chain is Cytoplasmic. Positions 889–908 (VSSPITQGSSSPLTDQSTPL) are enriched in polar residues. Disordered regions lie at residues 889–914 (VSSPITQGSSSPLTDQSTPLPRSPEQ) and 932–952 (FTTQSEQVEDEESAIIQCEGE).

It belongs to the glutamate-gated ion channel (TC 1.A.10.1) family. May form heteromers. Expressed predominantly in leaves.

Its subcellular location is the membrane. In terms of biological role, glutamate-gated receptor that probably acts as a non-selective cation channel. May be involved in light-signal transduction and calcium homeostasis via the regulation of calcium influx into cells. This is Glutamate receptor 2.7 (GLR2.7) from Arabidopsis thaliana (Mouse-ear cress).